The primary structure comprises 404 residues: Acetate kinase (404 aa).

Asparagine 7 contacts Mg(2+). Lysine 14 contributes to the ATP binding site. Arginine 95 contacts substrate. Aspartate 152 (proton donor/acceptor) is an active-site residue. ATP contacts are provided by residues 212–216 (HLGNG), 286–288 (DMR), and 334–338 (GIGEN). A Mg(2+)-binding site is contributed by glutamate 388.

Belongs to the acetokinase family. In terms of assembly, homodimer. The cofactor is Mg(2+). Mn(2+) is required as a cofactor.

It localises to the cytoplasm. The catalysed reaction is acetate + ATP = acetyl phosphate + ADP. It functions in the pathway metabolic intermediate biosynthesis; acetyl-CoA biosynthesis; acetyl-CoA from acetate: step 1/2. Catalyzes the formation of acetyl phosphate from acetate and ATP. Can also catalyze the reverse reaction. In Lawsonia intracellularis (strain PHE/MN1-00), this protein is Acetate kinase.